The following is a 306-amino-acid chain: Ornithine carbamoyltransferase (306 aa).

Residues 46–49 (STRT), Q73, R97, and 124–127 (HPTQ) each bind carbamoyl phosphate. Residues N156, D220, and 224-225 (SM) each bind L-ornithine. Residues 260–261 (CL) and R288 contribute to the carbamoyl phosphate site.

Belongs to the aspartate/ornithine carbamoyltransferase superfamily. OTCase family.

The protein localises to the cytoplasm. The catalysed reaction is carbamoyl phosphate + L-ornithine = L-citrulline + phosphate + H(+). It functions in the pathway amino-acid biosynthesis; L-arginine biosynthesis; L-arginine from L-ornithine and carbamoyl phosphate: step 1/3. Functionally, reversibly catalyzes the transfer of the carbamoyl group from carbamoyl phosphate (CP) to the N(epsilon) atom of ornithine (ORN) to produce L-citrulline. The chain is Ornithine carbamoyltransferase from Campylobacter jejuni (strain RM1221).